A 489-amino-acid chain; its full sequence is 3-octaprenyl-4-hydroxybenzoate carboxy-lyase (489 aa).

Mn(2+) is bound at residue Asn172. Residues 175–177, 189–191, and 194–195 each bind prenylated FMN; these read IYR, RWL, and RG. Residue Glu238 participates in Mn(2+) binding. Asp287 (proton donor) is an active-site residue.

It belongs to the UbiD family. In terms of assembly, homohexamer. Prenylated FMN serves as cofactor. The cofactor is Mn(2+).

Its subcellular location is the cell membrane. The catalysed reaction is a 4-hydroxy-3-(all-trans-polyprenyl)benzoate + H(+) = a 2-(all-trans-polyprenyl)phenol + CO2. It functions in the pathway cofactor biosynthesis; ubiquinone biosynthesis. Its function is as follows. Catalyzes the decarboxylation of 3-octaprenyl-4-hydroxy benzoate to 2-octaprenylphenol, an intermediate step in ubiquinone biosynthesis. The polypeptide is 3-octaprenyl-4-hydroxybenzoate carboxy-lyase (Aeromonas hydrophila subsp. hydrophila (strain ATCC 7966 / DSM 30187 / BCRC 13018 / CCUG 14551 / JCM 1027 / KCTC 2358 / NCIMB 9240 / NCTC 8049)).